The chain runs to 324 residues: Acetyl-coenzyme A carboxylase carboxyl transferase subunit alpha (324 aa).

The CoA carboxyltransferase C-terminal domain maps to 37-291 (ILEEKLENLE…DLMIRKTFEQ (255 aa)).

It belongs to the AccA family. Acetyl-CoA carboxylase is a heterohexamer composed of biotin carboxyl carrier protein (AccB), biotin carboxylase (AccC) and two subunits each of ACCase subunit alpha (AccA) and ACCase subunit beta (AccD).

It is found in the cytoplasm. It catalyses the reaction N(6)-carboxybiotinyl-L-lysyl-[protein] + acetyl-CoA = N(6)-biotinyl-L-lysyl-[protein] + malonyl-CoA. Its pathway is lipid metabolism; malonyl-CoA biosynthesis; malonyl-CoA from acetyl-CoA: step 1/1. Functionally, component of the acetyl coenzyme A carboxylase (ACC) complex. First, biotin carboxylase catalyzes the carboxylation of biotin on its carrier protein (BCCP) and then the CO(2) group is transferred by the carboxyltransferase to acetyl-CoA to form malonyl-CoA. The chain is Acetyl-coenzyme A carboxylase carboxyl transferase subunit alpha from Bacillus cereus (strain B4264).